Here is a 265-residue protein sequence, read N- to C-terminus: Phosphatidylglycerol--prolipoprotein diacylglyceryl transferase (265 aa).

7 helical membrane-spanning segments follow: residues 17 to 37, 59 to 79, 94 to 114, 123 to 143, 177 to 197, 204 to 224, and 238 to 258; these read LAIR…IWLA, MLFY…VLFY, VWKG…AMSI, VLDV…FGRL, SPLY…WLFA, MAVG…TEYF, and ISAG…MLLI. An a 1,2-diacyl-sn-glycero-3-phospho-(1'-sn-glycerol)-binding site is contributed by Arg142.

This sequence belongs to the Lgt family.

The protein resides in the cell inner membrane. The enzyme catalyses L-cysteinyl-[prolipoprotein] + a 1,2-diacyl-sn-glycero-3-phospho-(1'-sn-glycerol) = an S-1,2-diacyl-sn-glyceryl-L-cysteinyl-[prolipoprotein] + sn-glycerol 1-phosphate + H(+). The protein operates within protein modification; lipoprotein biosynthesis (diacylglyceryl transfer). Catalyzes the transfer of the diacylglyceryl group from phosphatidylglycerol to the sulfhydryl group of the N-terminal cysteine of a prolipoprotein, the first step in the formation of mature lipoproteins. In Janthinobacterium sp. (strain Marseille) (Minibacterium massiliensis), this protein is Phosphatidylglycerol--prolipoprotein diacylglyceryl transferase.